Reading from the N-terminus, the 177-residue chain is Adenine phosphoribosyltransferase (177 aa).

Belongs to the purine/pyrimidine phosphoribosyltransferase family. As to quaternary structure, homodimer.

It is found in the cytoplasm. The enzyme catalyses AMP + diphosphate = 5-phospho-alpha-D-ribose 1-diphosphate + adenine. It participates in purine metabolism; AMP biosynthesis via salvage pathway; AMP from adenine: step 1/1. Its function is as follows. Catalyzes a salvage reaction resulting in the formation of AMP, that is energically less costly than de novo synthesis. This Idiomarina loihiensis (strain ATCC BAA-735 / DSM 15497 / L2-TR) protein is Adenine phosphoribosyltransferase.